Reading from the N-terminus, the 418-residue chain is Putative competence-damage inducible protein (418 aa).

The protein belongs to the CinA family.

In Streptococcus pneumoniae (strain 70585), this protein is Putative competence-damage inducible protein.